A 187-amino-acid chain; its full sequence is Adenylate kinase (187 aa).

An ATP-binding site is contributed by 10 to 15 (GSGKGT). An NMP region spans residues 30–59 (STGDLLRAEVAAGSPLGLKAKEVMARGDLV). Residues T31, R36, 57-59 (DLV), 85-88 (GYPR), and Q92 each bind AMP. Residues 126-136 (GRAKAEGREDD) are LID. ATP is bound at residue R127. The AMP site is built by R133 and R144. G172 is an ATP binding site.

The protein belongs to the adenylate kinase family. As to quaternary structure, monomer.

The protein resides in the cytoplasm. The catalysed reaction is AMP + ATP = 2 ADP. It participates in purine metabolism; AMP biosynthesis via salvage pathway; AMP from ADP: step 1/1. Its function is as follows. Catalyzes the reversible transfer of the terminal phosphate group between ATP and AMP. Plays an important role in cellular energy homeostasis and in adenine nucleotide metabolism. This chain is Adenylate kinase, found in Xanthomonas oryzae pv. oryzae (strain MAFF 311018).